Consider the following 312-residue polypeptide: Dipeptide transport ATP-binding protein DppF (312 aa).

The region spanning 10–255 is the ABC transporter domain; sequence IKNLDLTFNK…PIHPYTKSLL (246 aa). Position 45–52 (45–52) interacts with ATP; the sequence is GESGSGKT.

Belongs to the ABC transporter superfamily. The complex is composed of two ATP-binding proteins (DppD and DppF), two transmembrane proteins (DppB and DppC) and a solute-binding protein (DppA).

Its subcellular location is the cell membrane. It catalyses the reaction a dipeptide(out) + ATP + H2O = a dipeptide(in) + ADP + phosphate + H(+). In terms of biological role, part of the ABC transporter DppABCDF involved in dipeptide transport. Responsible for energy coupling to the transport system. This Lactococcus lactis subsp. cremoris (strain MG1363) protein is Dipeptide transport ATP-binding protein DppF.